Consider the following 369-residue polypeptide: Flagellar P-ring protein (369 aa).

Residues 1–22 (MIKLKQLIAATLLLSTAFGVHA) form the signal peptide.

It belongs to the FlgI family. As to quaternary structure, the basal body constitutes a major portion of the flagellar organelle and consists of four rings (L,P,S, and M) mounted on a central rod.

The protein localises to the periplasm. It localises to the bacterial flagellum basal body. Assembles around the rod to form the L-ring and probably protects the motor/basal body from shearing forces during rotation. This is Flagellar P-ring protein from Pseudomonas syringae pv. syringae (strain B728a).